The chain runs to 121 residues: Small ribosomal subunit protein uS13 (121 aa).

The segment at 95 to 121 (LPMRGQRTRTNARTRKGPRKAAASLKK) is disordered.

This sequence belongs to the universal ribosomal protein uS13 family. In terms of assembly, part of the 30S ribosomal subunit. Forms a loose heterodimer with protein S19. Forms two bridges to the 50S subunit in the 70S ribosome.

Its function is as follows. Located at the top of the head of the 30S subunit, it contacts several helices of the 16S rRNA. In the 70S ribosome it contacts the 23S rRNA (bridge B1a) and protein L5 of the 50S subunit (bridge B1b), connecting the 2 subunits; these bridges are implicated in subunit movement. Contacts the tRNAs in the A and P-sites. This chain is Small ribosomal subunit protein uS13, found in Polaromonas naphthalenivorans (strain CJ2).